Here is an 82-residue protein sequence, read N- to C-terminus: U10-myrmicitoxin-Mri1c (82 aa).

The first 26 residues, 1–26, serve as a signal peptide directing secretion; sequence MRLSYVSLTLAIIFVMAIVHAPETEA. Residues 27–52 constitute a propeptide that is removed on maturation; sequence KAYPEADAVGEASAVGEADAVGVADP. Position 81 is an isoleucine amide (Ile-81).

It belongs to the formicidae venom precursor-01 superfamily. In terms of tissue distribution, expressed by the venom gland.

Its subcellular location is the secreted. In terms of biological role, induces paralysis 5 minutes after injection into blowflies (L.caesar). In most cases is not lethal 24 hours after injection, but paralysis is irreversible. May have antimicrobial properties, like most ant linear peptides. In Manica rubida (European giant red ant), this protein is U10-myrmicitoxin-Mri1c.